Consider the following 293-residue polypeptide: tRNA pseudouridine synthase B (293 aa).

Asp40 acts as the Nucleophile in catalysis.

Belongs to the pseudouridine synthase TruB family. Type 1 subfamily.

The catalysed reaction is uridine(55) in tRNA = pseudouridine(55) in tRNA. Responsible for synthesis of pseudouridine from uracil-55 in the psi GC loop of transfer RNAs. The polypeptide is tRNA pseudouridine synthase B (Mycolicibacterium paratuberculosis (strain ATCC BAA-968 / K-10) (Mycobacterium paratuberculosis)).